The chain runs to 433 residues: ATP-dependent protease ATPase subunit HslU (433 aa).

ATP-binding positions include Ile18, 60–65 (GVGKTE), Asp246, Glu311, and Arg383.

This sequence belongs to the ClpX chaperone family. HslU subfamily. A double ring-shaped homohexamer of HslV is capped on each side by a ring-shaped HslU homohexamer. The assembly of the HslU/HslV complex is dependent on binding of ATP.

The protein resides in the cytoplasm. ATPase subunit of a proteasome-like degradation complex; this subunit has chaperone activity. The binding of ATP and its subsequent hydrolysis by HslU are essential for unfolding of protein substrates subsequently hydrolyzed by HslV. HslU recognizes the N-terminal part of its protein substrates and unfolds these before they are guided to HslV for hydrolysis. This Cereibacter sphaeroides (strain ATCC 17029 / ATH 2.4.9) (Rhodobacter sphaeroides) protein is ATP-dependent protease ATPase subunit HslU.